The chain runs to 100 residues: Large ribosomal subunit protein eL21 (100 aa).

Residues 1-21 are disordered; it reads MVKRTHGYRYKSRKLLRKKPR.

This sequence belongs to the eukaryotic ribosomal protein eL21 family.

The polypeptide is Large ribosomal subunit protein eL21 (Pyrobaculum islandicum (strain DSM 4184 / JCM 9189 / GEO3)).